A 478-amino-acid chain; its full sequence is F-box/kelch-repeat protein At1g51550 (478 aa).

The tract at residues 1 to 20 is disordered; the sequence is MAAESTRNSSPPSTSQSSSP. Residues 9-20 are compositionally biased toward low complexity; the sequence is SSPPSTSQSSSP. The F-box domain maps to 18–64; sequence SSPIINLPDDHLLTILLLLPVDSILSFSMTCKRYKSLACSDSLWEAL. 2 Kelch repeats span residues 135–187 and 246–299; these read LVLF…VIGE and KMVV…CIRE.

This is F-box/kelch-repeat protein At1g51550 from Arabidopsis thaliana (Mouse-ear cress).